The following is a 172-amino-acid chain: Peptide methionine sulfoxide reductase MsrA 1 (172 aa).

Residue cysteine 14 is part of the active site.

This sequence belongs to the MsrA Met sulfoxide reductase family.

It catalyses the reaction L-methionyl-[protein] + [thioredoxin]-disulfide + H2O = L-methionyl-(S)-S-oxide-[protein] + [thioredoxin]-dithiol. It carries out the reaction [thioredoxin]-disulfide + L-methionine + H2O = L-methionine (S)-S-oxide + [thioredoxin]-dithiol. Functionally, has an important function as a repair enzyme for proteins that have been inactivated by oxidation. Catalyzes the reversible oxidation-reduction of methionine sulfoxide in proteins to methionine. This is Peptide methionine sulfoxide reductase MsrA 1 (msrA1) from Mesorhizobium japonicum (strain LMG 29417 / CECT 9101 / MAFF 303099) (Mesorhizobium loti (strain MAFF 303099)).